The sequence spans 163 residues: Large ribosomal subunit protein uL15 (163 aa).

Positions 1–43 (MKLNEIADNEGSRKKRTRVGRGIGSGKGKQSGRGGKGQTARSG) are disordered. The span at 21-37 (RGIGSGKGKQSGRGGKG) shows a compositional bias: gly residues.

Belongs to the universal ribosomal protein uL15 family. As to quaternary structure, part of the 50S ribosomal subunit.

Functionally, binds to the 23S rRNA. This chain is Large ribosomal subunit protein uL15, found in Afipia carboxidovorans (strain ATCC 49405 / DSM 1227 / KCTC 32145 / OM5) (Oligotropha carboxidovorans).